Consider the following 418-residue polypeptide: Actin-related protein 3 (418 aa).

Ala2 is subject to N-acetylalanine. N6-acetyllysine is present on residues Lys240, Lys244, Lys251, and Lys254.

This sequence belongs to the actin family. ARP3 subfamily. In terms of assembly, component of the Arp2/3 complex composed of ACTR2/ARP2, ACTR3/ARP3, ARPC1B/p41-ARC, ARPC2/p34-ARC, ARPC3/p21-ARC, ARPC4/p20-ARC and ARPC5/p16-ARC. Interacts with WHDC1. Interacts weakly with MEFV. Interacts with AVIL.

It is found in the cytoplasm. The protein resides in the cytoskeleton. The protein localises to the cell projection. Its subcellular location is the nucleus. ATP-binding component of the Arp2/3 complex, a multiprotein complex that mediates actin polymerization upon stimulation by nucleation-promoting factor (NPF). The Arp2/3 complex mediates the formation of branched actin networks in the cytoplasm, providing the force for cell motility. Seems to contact the pointed end of the daughter actin filament. In podocytes, required for the formation of lamellipodia downstream of AVIL and PLCE1 regulation. In addition to its role in the cytoplasmic cytoskeleton, the Arp2/3 complex also promotes actin polymerization in the nucleus, thereby regulating gene transcription and repair of damaged DNA. The Arp2/3 complex promotes homologous recombination (HR) repair in response to DNA damage by promoting nuclear actin polymerization, leading to drive motility of double-strand breaks (DSBs). Plays a role in ciliogenesis. The protein is Actin-related protein 3 (ACTR3) of Bos taurus (Bovine).